A 163-amino-acid polypeptide reads, in one-letter code: Cyclic pyranopterin monophosphate synthase (163 aa).

Residues 74-76 and 111-112 contribute to the substrate site; these read MCH and ME. The active site involves aspartate 126.

Belongs to the MoaC family. As to quaternary structure, homohexamer; trimer of dimers.

The enzyme catalyses (8S)-3',8-cyclo-7,8-dihydroguanosine 5'-triphosphate = cyclic pyranopterin phosphate + diphosphate. It functions in the pathway cofactor biosynthesis; molybdopterin biosynthesis. Its function is as follows. Catalyzes the conversion of (8S)-3',8-cyclo-7,8-dihydroguanosine 5'-triphosphate to cyclic pyranopterin monophosphate (cPMP). In Desulfitobacterium hafniense (strain DSM 10664 / DCB-2), this protein is Cyclic pyranopterin monophosphate synthase.